Here is a 439-residue protein sequence, read N- to C-terminus: Type I secretion system membrane fusion protein PrsE (439 aa).

The chain crosses the membrane as a helical span at residues 20–40 (LIGVSVLALALVAGVGGWAAT).

Belongs to the membrane fusion protein (MFP) (TC 8.A.1) family. Part of a type I secretion system composed of PrsD and PrsE.

Its subcellular location is the cell inner membrane. Functionally, mediates secretion of glycanase ExsH. In Rhizobium meliloti (strain 1021) (Ensifer meliloti), this protein is Type I secretion system membrane fusion protein PrsE (prsE).